The sequence spans 353 residues: Ornithine racemase (353 aa).

Lysine 35 acts as the Proton acceptor in catalysis. An N6-(pyridoxal phosphate)lysine modification is found at lysine 35. Arginine 128 provides a ligand contact to substrate.

Belongs to the alanine racemase family. In terms of assembly, homodimer. Pyridoxal 5'-phosphate is required as a cofactor.

It carries out the reaction L-ornithine = D-ornithine. In terms of biological role, involved in the ornithine fermentation pathway. Catalyzes the conversion of L-ornithine to D-ornithine. OR could also racemize basic amino acids such as lysine and arginine. Serine, asparagine and alanine could be also converted by OR, but at a lower rate. This is Ornithine racemase from Acetoanaerobium sticklandii (strain ATCC 12662 / DSM 519 / JCM 1433 / CCUG 9281 / NCIMB 10654 / HF) (Clostridium sticklandii).